The primary structure comprises 323 residues: tRNA N6-adenosine threonylcarbamoyltransferase (323 aa).

Histidine 105, histidine 109, and tyrosine 126 together coordinate Fe cation. Substrate contacts are provided by residues 126–130 (YVSGG), aspartate 158, glycine 171, glutamate 175, and asparagine 255. Aspartate 283 is a binding site for Fe cation.

Belongs to the KAE1 / TsaD family. In terms of assembly, monomer. Component of the KEOPS complex that consists of Kae1, Bud32, Cgi121 and Pcc1; the whole complex dimerizes. Fe(2+) serves as cofactor.

The protein resides in the cytoplasm. It carries out the reaction L-threonylcarbamoyladenylate + adenosine(37) in tRNA = N(6)-L-threonylcarbamoyladenosine(37) in tRNA + AMP + H(+). Its function is as follows. Required for the formation of a threonylcarbamoyl group on adenosine at position 37 (t(6)A37) in tRNAs that read codons beginning with adenine. Is a component of the KEOPS complex that is probably involved in the transfer of the threonylcarbamoyl moiety of threonylcarbamoyl-AMP (TC-AMP) to the N6 group of A37. Kae1 likely plays a direct catalytic role in this reaction, but requires other protein(s) of the complex to fulfill this activity. The chain is tRNA N6-adenosine threonylcarbamoyltransferase from Archaeoglobus fulgidus (strain ATCC 49558 / DSM 4304 / JCM 9628 / NBRC 100126 / VC-16).